We begin with the raw amino-acid sequence, 92 residues long: Small ribosomal subunit protein uS19 (92 aa).

This sequence belongs to the universal ribosomal protein uS19 family.

Its function is as follows. Protein S19 forms a complex with S13 that binds strongly to the 16S ribosomal RNA. This Sodalis glossinidius (strain morsitans) protein is Small ribosomal subunit protein uS19.